The chain runs to 442 residues: Protein PRRC1-B (442 aa).

The disordered stretch occupies residues 1-24 (MMEESGIETTPPSTPPPSTIGTSV).

Belongs to the PRRC1 family.

It localises to the golgi apparatus. The protein is Protein PRRC1-B (prrc1-b) of Xenopus laevis (African clawed frog).